A 196-amino-acid polypeptide reads, in one-letter code: Large ribosomal subunit protein eL15 (196 aa).

A compositionally biased stretch (basic residues) spans 69–98 (RKGGSRKQRHKAGRRSKRQGVNRLSRRKSI). Disordered regions lie at residues 69 to 100 (RKGGSRKQRHKAGRRSKRQGVNRLSRRKSIQR) and 161 to 196 (FRGLTSAGTKGRGQRTRGTGTEKTRPSVTGNDRQGK). Over residues 186–196 (PSVTGNDRQGK) the composition is skewed to polar residues.

This sequence belongs to the eukaryotic ribosomal protein eL15 family.

This is Large ribosomal subunit protein eL15 from Halorubrum lacusprofundi (strain ATCC 49239 / DSM 5036 / JCM 8891 / ACAM 34).